Reading from the N-terminus, the 156-residue chain is Small ribosomal subunit protein uS7 (156 aa).

The protein belongs to the universal ribosomal protein uS7 family. In terms of assembly, part of the 30S ribosomal subunit. Contacts proteins S9 and S11.

Functionally, one of the primary rRNA binding proteins, it binds directly to 16S rRNA where it nucleates assembly of the head domain of the 30S subunit. Is located at the subunit interface close to the decoding center, probably blocks exit of the E-site tRNA. In Nitrobacter hamburgensis (strain DSM 10229 / NCIMB 13809 / X14), this protein is Small ribosomal subunit protein uS7.